The following is a 520-amino-acid chain: Acetylcholine receptor subunit delta (520 aa).

The signal sequence occupies residues 1 to 24; it reads MAGPVLTLGLLAALVVCALPGSWG. Over 25-248 the chain is Extracellular; it reads LNEEQRLIQH…VTFYLIIRRK (224 aa). N100, N167, and N193 each carry an N-linked (GlcNAc...) asparagine glycan. C154 and C168 are disulfide-bonded. The next 3 membrane-spanning stretches (helical) occupy residues 249 to 273, 281 to 299, and 315 to 336; these read PLFY…VFYL, TSVA…LLIS, and FLLF…VLNI. The Cytoplasmic portion of the chain corresponds to 337–474; it reads HFRTPSTHVL…WNQVARTVDR (138 aa). Y393 is subject to Phosphotyrosine; by Tyr-kinases. A helical transmembrane segment spans residues 475-493; the sequence is LCLFVVTPVMVVGTAWIFL.

The protein belongs to the ligand-gated ion channel (TC 1.A.9) family. Acetylcholine receptor (TC 1.A.9.1) subfamily. Delta/CHRND sub-subfamily. Pentamer of two alpha chains, and one each of the beta, delta, and gamma (in immature muscle) or epsilon (in mature muscle) chains. The muscle heteropentamer composed of alpha-1, beta-1, delta, epsilon subunits interacts with the alpha-conotoxin ImII.

It localises to the postsynaptic cell membrane. Its subcellular location is the cell membrane. The catalysed reaction is K(+)(in) = K(+)(out). It catalyses the reaction Na(+)(in) = Na(+)(out). Its function is as follows. After binding acetylcholine, the AChR responds by an extensive change in conformation that affects all subunits and leads to opening of an ion-conducting channel across the plasma membrane. The polypeptide is Acetylcholine receptor subunit delta (Chrnd) (Mus musculus (Mouse)).